The chain runs to 301 residues: Glycine--tRNA ligase alpha subunit (301 aa).

It belongs to the class-II aminoacyl-tRNA synthetase family. In terms of assembly, tetramer of two alpha and two beta subunits.

It localises to the cytoplasm. The catalysed reaction is tRNA(Gly) + glycine + ATP = glycyl-tRNA(Gly) + AMP + diphosphate. The chain is Glycine--tRNA ligase alpha subunit from Shewanella frigidimarina (strain NCIMB 400).